Consider the following 3432-residue polypeptide: Genome polyprotein (3432 aa).

The segment at 2–15 is interaction with host EXOC1; it reads TKKPGGPGKNRAIN. Over 2–109 the chain is Cytoplasmic; that stretch reads TKKPGGPGKN…KKQNKRGGNE (108 aa). Residues 37-72 are hydrophobic; homodimerization of capsid protein C; it reads LLDGRGPVRFVLALITFFKFTALAPTKALLGRWRAV. Residues 106-127 constitute a propeptide, ER anchor for the capsid protein C, removed in mature form by serine protease NS3; it reads GGNESSIMWLASLAIVIACAGA. The chain crosses the membrane as a helical span at residues 110-130; it reads SSIMWLASLAIVIACAGAMKL. Topologically, residues 131 to 253 are extracellular; sequence SNFQGKLLMT…ATRYLMKTEN (123 aa). Asn142 carries N-linked (GlcNAc...) asparagine; by host glycosylation. A helical membrane pass occupies residues 254–274; it reads WIIRNPGYAFLAAALGWMLGS. Residues 275–279 lie on the Cytoplasmic side of the membrane; the sequence is NSGQR. The helical transmembrane segment at 280–294 threads the bilayer; sequence VVFTILLLLVAPAYS. Residues 295–746 are Extracellular-facing; the sequence is FNCLGMGNRD…QVFGGAFRTL (452 aa). 6 disulfides stabilise this stretch: Cys297/Cys324, Cys354/Cys410, Cys354/Cys415, Cys368/Cys399, Cys386/Cys410, and Cys386/Cys415. Residues 392-405 form a fusion peptide region; it reads DRGWGNGCGLFGKG. Asn448 carries N-linked (GlcNAc...) asparagine; by host glycosylation. 2 disulfides stabilise this stretch: Cys484/Cys581 and Cys598/Cys629. A helical membrane pass occupies residues 747–767; that stretch reads FGGMSWITQGLMGALLLWMGV. Residues 768 to 773 lie on the Cytoplasmic side of the membrane; the sequence is NARDRS. A helical membrane pass occupies residues 774-794; it reads IALAFLATGGVLVFLATNVHA. Residues 795-1219 are Extracellular-facing; the sequence is DTGCAIDITR…AFAEANSGGD (425 aa). 6 disulfide bridges follow: Cys798-Cys809, Cys849-Cys937, Cys973-Cys1017, Cys1074-Cys1123, Cys1085-Cys1106, and Cys1107-Cys1110. Asn924 and Asn1001 each carry an N-linked (GlcNAc...) asparagine; by host glycan. The helical transmembrane segment at 1220-1240 threads the bilayer; the sequence is VLHLALIAVFKIQPAFLVMNM. At 1241-1250 the chain is on the cytoplasmic side; it reads LSARWTNQEN. The helical transmembrane segment at 1251–1271 threads the bilayer; the sequence is MVLVLGAAFFQLASVDLQIGV. His1272 is a topological domain (lumenal). The chain crosses the membrane as a helical span at residues 1273–1293; that stretch reads GILNAAAIAWMIVRAITFPTT. Topologically, residues 1294-1309 are cytoplasmic; it reads STVAMPVLALLTPGMR. A helical membrane pass occupies residues 1310-1330; it reads ALYLDTYRIILLVIGICSLLQ. Topologically, residues 1331–1341 are lumenal; it reads ERRKTMAKKKG. A helical membrane pass occupies residues 1342 to 1362; it reads AVLLGLALTSTGWFSPTTIAA. Residues 1363 to 1374 are Cytoplasmic-facing; the sequence is GLMVCNPNKKRG. The helical transmembrane segment at 1375-1395 threads the bilayer; the sequence is WPATEFLSAVGLMFAIVGGLA. The Lumenal portion of the chain corresponds to 1396-1398; the sequence is ELD. Residues 1399–1419 traverse the membrane as a helical segment; sequence IESMSIPFMLAGLMAVSYVIS. Residues 1420–1476 lie on the Cytoplasmic side of the membrane; sequence GKATDMWLDRAADISWEMEAAITGSSRRLDVKLDDDGDFHLIDDPGVPWKVWLLRMS. Residues 1427 to 1466 are interacts with and activates NS3 protease; it reads LDRAADISWEMEAAITGSSRRLDVKLDDDGDFHLIDDPGV. An intramembrane region (helical) is located at residues 1477-1497; sequence CIGLAALTPWAIVPAAFGYWL. The Cytoplasmic portion of the chain corresponds to 1498–2173; that stretch reads TLKTTKRGGV…RMALEELPDA (676 aa). Residues 1505–1682 form the Peptidase S7 domain; the sequence is GGVFWDTPSP…DRQEEPVPDA (178 aa). Active-site charge relay system; for serine protease NS3 activity residues include His1555, Asp1579, and Ser1639. The Helicase ATP-binding domain occupies 1685–1841; sequence PSMLKKRQMT…DSNAPIHDLQ (157 aa). The segment at 1689–1692 is important for RNA-binding; that stretch reads KKRQ. 1698–1705 is a binding site for ATP; that stretch reads LHPGSGKT. The short motif at 1789 to 1792 is the DEAH box element; sequence DEAH. Residues 1852-2017 enclose the Helicase C-terminal domain; the sequence is GYEWITEYAG…GLVAQLYGPE (166 aa). Lys1893 bears the N6-acetyllysine; by host mark. A disordered region spans residues 1950–1969; that stretch reads NPSPITSASAAQRRGRVGRN. Residues 2168–2172 form a regulates the ATPase activity of NS3 helicase region; it reads EELPD. Residues 2174 to 2194 form a helical membrane-spanning segment; it reads LETITLIVAITVMTGGFFLLM. At 2195–2199 the chain is on the lumenal side; that stretch reads MQRKG. Residues 2200–2220 constitute an intramembrane region (helical); sequence IGKMGLGALVLTLATFFLWAA. Residue Glu2221 is a topological domain, lumenal. A helical transmembrane segment spans residues 2222 to 2242; sequence VPGTKIAGTLLVALLLMVVLI. The Cytoplasmic portion of the chain corresponds to 2243-2257; that stretch reads PEPEKQRSQTDNQLA. Residues 2258 to 2278 form a helical membrane-spanning segment; it reads VFLICVLTVVGVVAANEYGML. Residues 2279–2311 lie on the Lumenal side of the membrane; it reads EKTKADLKSMFGGRTQAPGLTGLPSMALDLRPA. Positions 2312-2332 form an intramembrane region, helical; the sequence is TAWALYGGSTVVLTPLLKHLI. Over 2333-2368 the chain is Lumenal; the sequence is TSEYVTTSLASISSQAGSLFVLPRGVPFTDLDLTVG. A helical membrane pass occupies residues 2369-2389; the sequence is LVFLGCWGQITLTTFLTAMVL. Topologically, residues 2390 to 2444 are cytoplasmic; that stretch reads VTLHYGYMLPGWQAEALRAAQRRTAAGIMKNAVVDGMVATDVPELERTTPLMQKK. Residues 2445-2465 form a helical membrane-spanning segment; the sequence is VGQVLLIGVSVAAFLVNPNVT. Residues 2466-2469 lie on the Lumenal side of the membrane; it reads TVRE. Residues 2470-2490 traverse the membrane as a helical segment; sequence AGVLVTAATLTLWDNGASAVW. The Cytoplasmic segment spans residues 2491–3432; the sequence is NSTTATGLCH…DVLIQEDRVI (942 aa). The region spanning 2528-2793 is the mRNA cap 0-1 NS5-type MT domain; it reads GRPGGRTLGE…DVNLGSGTRA (266 aa). Ser2583 contacts S-adenosyl-L-methionine. Ser2583 carries the post-translational modification Phosphoserine. Lys2588 acts as the For 2'-O-MTase activity in catalysis. S-adenosyl-L-methionine contacts are provided by Gly2613, Trp2614, Thr2631, Lys2632, Asp2658, and Val2659. Asp2673 functions as the For 2'-O-MTase activity in the catalytic mechanism. Position 2674 (Ile2674) interacts with S-adenosyl-L-methionine. Active-site for 2'-O-MTase activity residues include Lys2709 and Glu2745. An S-adenosyl-L-methionine-binding site is contributed by Tyr2747. Zn(2+) contacts are provided by Glu2967, His2971, Cys2976, and Cys2979. The region spanning 3057–3209 is the RdRp catalytic domain; that stretch reads GKMYADDTAG…KPLDDRFATA (153 aa). The Zn(2+) site is built by His3244, Cys3260, and Cys3379.

This sequence in the N-terminal section; belongs to the class I-like SAM-binding methyltransferase superfamily. mRNA cap 0-1 NS5-type methyltransferase family. Homodimer. Interacts (via N-terminus) with host EXOC1 (via C-terminus); this interaction results in EXOC1 degradation through the proteasome degradation pathway. In terms of assembly, forms heterodimers with envelope protein E in the endoplasmic reticulum and Golgi. As to quaternary structure, homodimer; in the endoplasmic reticulum and Golgi. Interacts with protein prM. Interacts with non-structural protein 1. Interacts with host HSPA5. Homodimer; Homohexamer when secreted. Interacts with envelope protein E. NS1 interacts with NS4B. Interacts with host complement protein CFH; this interaction leads to the degradation of C3. In terms of assembly, interacts (via N-terminus) with serine protease NS3. As to quaternary structure, forms a heterodimer with serine protease NS3. May form homooligomers. Forms a heterodimer with NS2B. Interacts with non-structural protein 2A (via N-terminus). Interacts with NS4B. Interacts with unphosphorylated RNA-directed RNA polymerase NS5; this interaction stimulates RNA-directed RNA polymerase NS5 guanylyltransferase activity. Interacts with host ILF2. In terms of assembly, interacts with serine protease NS3. As to quaternary structure, homodimer. Interacts with host STAT2; this interaction inhibits the phosphorylation of the latter, and, when all viral proteins are present (polyprotein), targets STAT2 for degradation. Interacts with serine protease NS3. It depends on Mn(2+) as a cofactor. Mg(2+) serves as cofactor. Post-translationally, specific enzymatic cleavages in vivo yield mature proteins. Cleavages in the lumen of endoplasmic reticulum are performed by host signal peptidase, whereas cleavages in the cytoplasmic side are performed by serine protease NS3. Signal cleavage at the 2K-4B site requires a prior NS3 protease-mediated cleavage at the 4A-2K site. In terms of processing, cleaved in post-Golgi vesicles by a host furin, releasing the mature small envelope protein M, and peptide pr. This cleavage is incomplete as up to 30% of viral particles still carry uncleaved prM. N-glycosylated. Post-translationally, N-glycosylated. The excreted form is glycosylated and this is required for efficient secretion of the protein from infected cells. In terms of processing, acetylated by host KAT5. Acetylation modulates NS3 RNA-binding and unwinding activities and plays an important positive role for viral replication. Phosphorylated on serines residues. This phosphorylation may trigger NS5 nuclear localization.

Its subcellular location is the host endoplasmic reticulum membrane. It is found in the virion. The protein localises to the host nucleus. The protein resides in the host cytoplasm. It localises to the host perinuclear region. Its subcellular location is the secreted. It is found in the virion membrane. The protein localises to the host cell surface. The enzyme catalyses Selective hydrolysis of -Xaa-Xaa-|-Yaa- bonds in which each of the Xaa can be either Arg or Lys and Yaa can be either Ser or Ala.. It catalyses the reaction a ribonucleoside 5'-triphosphate + H2O = a ribonucleoside 5'-diphosphate + phosphate + H(+). The catalysed reaction is RNA(n) + a ribonucleoside 5'-triphosphate = RNA(n+1) + diphosphate. It carries out the reaction ATP + H2O = ADP + phosphate + H(+). The enzyme catalyses a 5'-end (5'-triphosphoguanosine)-ribonucleoside in mRNA + S-adenosyl-L-methionine = a 5'-end (N(7)-methyl 5'-triphosphoguanosine)-ribonucleoside in mRNA + S-adenosyl-L-homocysteine. It catalyses the reaction a 5'-end (N(7)-methyl 5'-triphosphoguanosine)-ribonucleoside in mRNA + S-adenosyl-L-methionine = a 5'-end (N(7)-methyl 5'-triphosphoguanosine)-(2'-O-methyl-ribonucleoside) in mRNA + S-adenosyl-L-homocysteine + H(+). Its function is as follows. Plays a role in virus budding by binding to the cell membrane and gathering the viral RNA into a nucleocapsid that forms the core of a mature virus particle. During virus entry, may induce genome penetration into the host cytoplasm after hemifusion induced by the surface proteins. Can migrate to the cell nucleus where it modulates host functions. Overcomes the anti-viral effects of host EXOC1 by sequestering and degrading the latter through the proteasome degradation pathway. Inhibits RNA silencing by interfering with host Dicer. Functionally, prevents premature fusion activity of envelope proteins in trans-Golgi by binding to envelope protein E at pH6.0. After virion release in extracellular space, gets dissociated from E dimers. In terms of biological role, acts as a chaperone for envelope protein E during intracellular virion assembly by masking and inactivating envelope protein E fusion peptide. prM is the only viral peptide matured by host furin in the trans-Golgi network probably to avoid catastrophic activation of the viral fusion activity in acidic Golgi compartment prior to virion release. prM-E cleavage is inefficient, and many virions are only partially matured. These uncleaved prM would play a role in immune evasion. Its function is as follows. May play a role in virus budding. Exerts cytotoxic effects by activating a mitochondrial apoptotic pathway through M ectodomain. May display a viroporin activity. Binds to host cell surface receptor and mediates fusion between viral and cellular membranes. Efficient virus attachment to cell is, at least in part, mediated by host HSPA5. Envelope protein is synthesized in the endoplasmic reticulum in the form of heterodimer with protein prM. They play a role in virion budding in the ER, and the newly formed immature particle is covered with 60 spikes composed of heterodimer between precursor prM and envelope protein E. The virion is transported to the Golgi apparatus where the low pH causes dissociation of PrM-E heterodimers and formation of E homodimers. prM-E cleavage is inefficient, and many virions are only partially matured. These uncleaved prM would play a role in immune evasion. Functionally, involved in immune evasion, pathogenesis and viral replication. Once cleaved off the polyprotein, is targeted to three destinations: the viral replication cycle, the plasma membrane and the extracellular compartment. Essential for viral replication. Required for formation of the replication complex and recruitment of other non-structural proteins to the ER-derived membrane structures. Excreted as a hexameric lipoparticle that plays a role against host immune response. Antagonizing the complement function. Binds to the host macrophages and dendritic cells. Inhibits signal transduction originating from Toll-like receptor 3 (TLR3). In terms of biological role, component of the viral RNA replication complex that functions in virion assembly and antagonizes the host alpha/beta interferon antiviral response. Its function is as follows. Required cofactor for the serine protease function of NS3. May have membrane-destabilizing activity and form viroporins. Displays three enzymatic activities: serine protease, NTPase and RNA helicase. NS3 serine protease, in association with NS2B, performs its autocleavage and cleaves the polyprotein at dibasic sites in the cytoplasm: C-prM, NS2A-NS2B, NS2B-NS3, NS3-NS4A, NS4A-2K and NS4B-NS5. NS3 RNA helicase binds RNA and unwinds dsRNA in the 3' to 5' direction. Functionally, regulates the ATPase activity of the NS3 helicase activity. NS4A allows NS3 helicase to conserve energy during unwinding. In terms of biological role, functions as a signal peptide for NS4B and is required for the interferon antagonism activity of the latter. Its function is as follows. Induces the formation of ER-derived membrane vesicles where the viral replication takes place. Inhibits interferon (IFN)-induced host STAT1 phosphorylation and nuclear translocation, thereby preventing the establishment of cellular antiviral state by blocking the IFN-alpha/beta pathway. Inhibits STAT2 translocation in the nucleus after IFN-alpha treatment. Replicates the viral (+) and (-) RNA genome. Performs the capping of genomes in the cytoplasm. NS5 methylates viral RNA cap at guanine N-7 and ribose 2'-O positions. Besides its role in RNA genome replication, also prevents the establishment of cellular antiviral state by blocking the interferon-alpha/beta (IFN-alpha/beta) signaling pathway. Inhibits host TYK2 and STAT2 phosphorylation, thereby preventing activation of JAK-STAT signaling pathway. In Japanese encephalitis virus (strain M28) (JEV), this protein is Genome polyprotein.